The chain runs to 96 residues: Co-chaperonin GroES (96 aa).

Belongs to the GroES chaperonin family. In terms of assembly, heptamer of 7 subunits arranged in a ring. Interacts with the chaperonin GroEL.

The protein localises to the cytoplasm. Its function is as follows. Together with the chaperonin GroEL, plays an essential role in assisting protein folding. The GroEL-GroES system forms a nano-cage that allows encapsulation of the non-native substrate proteins and provides a physical environment optimized to promote and accelerate protein folding. GroES binds to the apical surface of the GroEL ring, thereby capping the opening of the GroEL channel. The chain is Co-chaperonin GroES from Hahella chejuensis (strain KCTC 2396).